A 96-amino-acid chain; its full sequence is NADH-ubiquinone oxidoreductase chain 4L (96 aa).

3 helical membrane-spanning segments follow: residues 1-21 (MELM…ALSL), 27-47 (MLAL…LVMF), and 61-81 (IILL…VVAI).

Belongs to the complex I subunit 4L family.

Its subcellular location is the mitochondrion membrane. The catalysed reaction is a ubiquinone + NADH + 5 H(+)(in) = a ubiquinol + NAD(+) + 4 H(+)(out). In terms of biological role, core subunit of the mitochondrial membrane respiratory chain NADH dehydrogenase (Complex I) which catalyzes electron transfer from NADH through the respiratory chain, using ubiquinone as an electron acceptor. Part of the enzyme membrane arm which is embedded in the lipid bilayer and involved in proton translocation. The sequence is that of NADH-ubiquinone oxidoreductase chain 4L (MT-ND4L) from Lycodon semicarinatus (Ryukyu odd-tooth snake).